We begin with the raw amino-acid sequence, 535 residues long: Beta-amylase 1, chloroplastic (535 aa).

Residues 1–36 (MALNLAQSAAAAACFATAGDARRAASVVAMPSSSSS) constitute a chloroplast transit peptide. Substrate contacts are provided by D115, H155, and D163. The Proton donor role is filled by E247. Substrate is bound by residues K361, H366, and T408. Catalysis depends on E446, which acts as the Proton acceptor. Residues 447–448 (NA) and R480 each bind substrate.

This sequence belongs to the glycosyl hydrolase 14 family.

Its subcellular location is the plastid. It localises to the chloroplast. It catalyses the reaction Hydrolysis of (1-&gt;4)-alpha-D-glucosidic linkages in polysaccharides so as to remove successive maltose units from the non-reducing ends of the chains.. In terms of biological role, possesses beta-amylase activity in vitro. May be involved in cold resistance by mediating the accumulation of maltose upon freezing stress, thus contributing to the protection of membranes. This Oryza sativa subsp. japonica (Rice) protein is Beta-amylase 1, chloroplastic.